A 352-amino-acid chain; its full sequence is Ketol-acid reductoisomerase (NAD(+)) (352 aa).

Positions 11-199 constitute a KARI N-terminal Rossmann domain; that stretch reads ENVVTSEEFT…AIGSGYLFPT (189 aa). Residues 38 to 41 and 100 to 103 each bind NAD(+); these read YGVQ and DAGQ. The active site involves His124. Gly153 contacts NAD(+). Positions 200 to 347 constitute a KARI C-terminal knotted domain; that stretch reads TFEKEVFSDL…AAVRALRPEN (148 aa). Positions 208, 212, 244, and 248 each coordinate Mg(2+). Ser270 lines the substrate pocket.

The protein belongs to the ketol-acid reductoisomerase family. Mg(2+) serves as cofactor.

It catalyses the reaction (2R)-2,3-dihydroxy-3-methylbutanoate + NAD(+) = (2S)-2-acetolactate + NADH + H(+). Its pathway is amino-acid biosynthesis; L-isoleucine biosynthesis; L-isoleucine from 2-oxobutanoate: step 2/4. The protein operates within amino-acid biosynthesis; L-valine biosynthesis; L-valine from pyruvate: step 2/4. Involved in the biosynthesis of branched-chain amino acids (BCAA). Catalyzes an alkyl-migration followed by a ketol-acid reduction of (S)-2-acetolactate (S2AL) to yield (R)-2,3-dihydroxy-isovalerate. In the isomerase reaction, S2AL is rearranged via a Mg-dependent methyl migration to produce 3-hydroxy-3-methyl-2-ketobutyrate (HMKB). In the reductase reaction, this 2-ketoacid undergoes a metal-dependent reduction by NADH to yield (R)-2,3-dihydroxy-isovalerate. The sequence is that of Ketol-acid reductoisomerase (NAD(+)) from Desulfosudis oleivorans (strain DSM 6200 / JCM 39069 / Hxd3) (Desulfococcus oleovorans).